The primary structure comprises 32 residues: ATP synthase subunit O, mitochondrial (32 aa).

The protein belongs to the ATPase delta chain family. F-type ATPases have 2 components, CF(1) - the catalytic core - and CF(0) - the membrane proton channel. CF(1) has five subunits: alpha(3), beta(3), gamma(1), delta(1), epsilon(1). CF(0) has three main subunits: a, b and c.

It localises to the mitochondrion. Its subcellular location is the mitochondrion inner membrane. In terms of biological role, mitochondrial membrane ATP synthase (F(1)F(0) ATP synthase or Complex V) produces ATP from ADP in the presence of a proton gradient across the membrane which is generated by electron transport complexes of the respiratory chain. F-type ATPases consist of two structural domains, F(1) - containing the extramembraneous catalytic core and F(0) - containing the membrane proton channel, linked together by a central stalk and a peripheral stalk. During catalysis, ATP synthesis in the catalytic domain of F(1) is coupled via a rotary mechanism of the central stalk subunits to proton translocation. Part of the complex F(0) domain and the peripheric stalk, which acts as a stator to hold the catalytic alpha(3)beta(3) subcomplex and subunit a/ATP6 static relative to the rotary elements. This Spinacia oleracea (Spinach) protein is ATP synthase subunit O, mitochondrial.